The primary structure comprises 224 residues: Charged multivesicular body protein 3 (224 aa).

Residue Gly2 is the site of N-myristoyl glycine attachment. Residues 2-113 (GLFGKTQEKP…LQKSTEVMKA (112 aa)) are intramolecular interaction with C-terminus. Residues 22 to 54 (KIRKEMRVVDRQIRDIQREEEKVKRSVKDAAKK) are a coiled coil. 2 important for autoinhibitory function regions span residues 59-64 (VCVVLA) and 168-169 (IL). The stretch at 149–224 (ESMDDQEEME…MQSRLATLRS (76 aa)) forms a coiled coil. Residues 151 to 222 (MDDQEEMEEA…EAMQSRLATL (72 aa)) form an intramolecular interaction with N-terminus region. Residues 151–224 (MDDQEEMEEA…MQSRLATLRS (74 aa)) form an interaction with VPS4A region. A Glycyl lysine isopeptide (Lys-Gly) (interchain with G-Cter in ubiquitin) cross-link involves residue Lys179. The tract at residues 180-224 (APSKVTDALPEPEPAGAMAASEEGEEEEDEEDLEAMQSRLATLRS) is disordered. Interaction with STAMBP regions lie at residues 196–224 (AMAA…TLRS), 205–209 (EEEDE), and 223–224 (RS). Ser200 carries the post-translational modification Phosphoserine. Residues 201 to 213 (EEGEEEEDEEDLE) carry the MIT-interacting motif motif. A compositionally biased stretch (acidic residues) spans 201–213 (EEGEEEEDEEDLE).

It belongs to the SNF7 family. As to quaternary structure, probable core component of the endosomal sorting required for transport complex III (ESCRT-III). ESCRT-III components are thought to multimerize to form a flat lattice on the perimeter membrane of the endosome. Several assembly forms of ESCRT-III may exist that interact and act sequentially. Forms a metastable monomer in solution; its core structure (without part of the putative autoinhibitory C-terminal acidic region) oligomerizes into a flat lattice via two different dimerization interfaces. In vitro, heteromerizes with CHMP2A (but not CHMP4) to form helical tubular structures that expose membrane-interacting sites on the outside whereas VPS4B can associate on the inside of the tubule. May interact with IGFBP7; the relevance of such interaction however remains unclear. Interacts with CHMP2A. Interacts with CHMP4A; the interaction requires the release of CHMP4A autoinhibition. Interacts with VPS4A. Interacts with STAMBP; the interaction appears to relieve the autoinhibition of CHMP3. Interacts with VTA1. Expressed in lung, testis, heart, spleen, skeletal muscle, kidney, liver and brain.

It is found in the cytoplasm. The protein localises to the cytosol. Its subcellular location is the membrane. The protein resides in the endosome. It localises to the late endosome membrane. Its function is as follows. Probable core component of the endosomal sorting required for transport complex III (ESCRT-III) which is involved in multivesicular bodies (MVBs) formation and sorting of endosomal cargo proteins into MVBs. MVBs contain intraluminal vesicles (ILVs) that are generated by invagination and scission from the limiting membrane of the endosome and mostly are delivered to lysosomes enabling degradation of membrane proteins, such as stimulated growth factor receptors, lysosomal enzymes and lipids. The MVB pathway appears to require the sequential function of ESCRT-O, -I,-II and -III complexes. ESCRT-III proteins mostly dissociate from the invaginating membrane before the ILV is released. The ESCRT machinery also functions in topologically equivalent membrane fission events, such as the terminal stages of cytokinesis. ESCRT-III proteins are believed to mediate the necessary vesicle extrusion and/or membrane fission activities, possibly in conjunction with the AAA ATPase VPS4. Selectively binds to phosphatidylinositol 3,5-bisphosphate PtdIns(3,5)P2 and PtdIns(3,4)P2 in preference to other phosphoinositides tested. Involved in late stages of cytokinesis. Plays a role in endosomal sorting/trafficking of EGF receptor. The sequence is that of Charged multivesicular body protein 3 (Chmp3) from Mus musculus (Mouse).